The following is a 237-amino-acid chain: Type III pantothenate kinase (237 aa).

Residue 6-13 (DAGNSRVK) participates in ATP binding. Residues Tyr-86 and 93–96 (GADR) contribute to the substrate site. Asp-95 functions as the Proton acceptor in the catalytic mechanism. An ATP-binding site is contributed by Thr-118. Position 168 (Thr-168) interacts with substrate.

This sequence belongs to the type III pantothenate kinase family. In terms of assembly, homodimer. NH4(+) serves as cofactor. The cofactor is K(+).

The protein localises to the cytoplasm. The enzyme catalyses (R)-pantothenate + ATP = (R)-4'-phosphopantothenate + ADP + H(+). It functions in the pathway cofactor biosynthesis; coenzyme A biosynthesis; CoA from (R)-pantothenate: step 1/5. Catalyzes the phosphorylation of pantothenate (Pan), the first step in CoA biosynthesis. The polypeptide is Type III pantothenate kinase (Chromobacterium violaceum (strain ATCC 12472 / DSM 30191 / JCM 1249 / CCUG 213 / NBRC 12614 / NCIMB 9131 / NCTC 9757 / MK)).